A 299-amino-acid polypeptide reads, in one-letter code: Probable xyloglucan endotransglucosylase/hydrolase protein 10 (299 aa).

The first 29 residues, 1-29 (MTLINRSKPFVLLVGFSIISSLLLWVSQA), serve as a signal peptide directing secretion. One can recognise a GH16 domain in the interval 30 to 225 (SVVSSGDFNK…WSKGPFVASF (196 aa)). Asparagine 51 is a glycosylation site (N-linked (GlcNAc...) asparagine). Glutamate 111 acts as the Nucleophile in catalysis. Glutamate 115 acts as the Proton donor in catalysis. Xyloglucan contacts are provided by residues glutamate 115, 128–130 (QTN), 138–140 (NRE), 204–205 (SW), and glycine 209. 2 disulfides stabilise this stretch: cysteine 233/cysteine 242 and cysteine 280/cysteine 294. Asparagine 238 carries an N-linked (GlcNAc...) asparagine glycan. Xyloglucan is bound at residue arginine 285.

Belongs to the glycosyl hydrolase 16 family. XTH group 1 subfamily. Contains at least one intrachain disulfide bond essential for its enzymatic activity.

The protein resides in the secreted. Its subcellular location is the cell wall. It is found in the extracellular space. It localises to the apoplast. It catalyses the reaction breaks a beta-(1-&gt;4) bond in the backbone of a xyloglucan and transfers the xyloglucanyl segment on to O-4 of the non-reducing terminal glucose residue of an acceptor, which can be a xyloglucan or an oligosaccharide of xyloglucan.. Its function is as follows. Catalyzes xyloglucan endohydrolysis (XEH) and/or endotransglycosylation (XET). Cleaves and religates xyloglucan polymers, an essential constituent of the primary cell wall, and thereby participates in cell wall construction of growing tissues. This is Probable xyloglucan endotransglucosylase/hydrolase protein 10 (XTH10) from Arabidopsis thaliana (Mouse-ear cress).